The primary structure comprises 309 residues: Ribonuclease Z (309 aa).

Zn(2+) is bound by residues histidine 63, histidine 65, aspartate 67, histidine 68, histidine 145, aspartate 216, and histidine 274. The active-site Proton acceptor is the aspartate 67.

Belongs to the RNase Z family. Homodimer. Zn(2+) serves as cofactor.

The catalysed reaction is Endonucleolytic cleavage of RNA, removing extra 3' nucleotides from tRNA precursor, generating 3' termini of tRNAs. A 3'-hydroxy group is left at the tRNA terminus and a 5'-phosphoryl group is left at the trailer molecule.. In terms of biological role, zinc phosphodiesterase, which displays some tRNA 3'-processing endonuclease activity. Probably involved in tRNA maturation, by removing a 3'-trailer from precursor tRNA. In Streptococcus pyogenes serotype M6 (strain ATCC BAA-946 / MGAS10394), this protein is Ribonuclease Z.